The sequence spans 210 residues: Chloramphenicol acetyltransferase (210 aa).

The active site involves histidine 79.

The protein belongs to the transferase hexapeptide repeat family.

It catalyses the reaction chloramphenicol + acetyl-CoA = chloramphenicol 3-acetate + CoA. This enzyme is an effector of chloramphenicol resistance in bacteria. This Morganella morganii (Proteus morganii) protein is Chloramphenicol acetyltransferase (cat).